A 185-amino-acid polypeptide reads, in one-letter code: ATP synthase subunit b, chloroplastic (185 aa).

A helical membrane pass occupies residues 31–49 (LINSGVVLGLPVYSGKGVL).

Belongs to the ATPase B chain family. As to quaternary structure, F-type ATPases have 2 components, F(1) - the catalytic core - and F(0) - the membrane proton channel. F(1) has five subunits: alpha(3), beta(3), gamma(1), delta(1), epsilon(1). F(0) has four main subunits: a(1), b(1), b'(1) and c(10-14). The alpha and beta chains form an alternating ring which encloses part of the gamma chain. F(1) is attached to F(0) by a central stalk formed by the gamma and epsilon chains, while a peripheral stalk is formed by the delta, b and b' chains.

It is found in the plastid. The protein resides in the chloroplast thylakoid membrane. Functionally, f(1)F(0) ATP synthase produces ATP from ADP in the presence of a proton or sodium gradient. F-type ATPases consist of two structural domains, F(1) containing the extramembraneous catalytic core and F(0) containing the membrane proton channel, linked together by a central stalk and a peripheral stalk. During catalysis, ATP synthesis in the catalytic domain of F(1) is coupled via a rotary mechanism of the central stalk subunits to proton translocation. Component of the F(0) channel, it forms part of the peripheral stalk, linking F(1) to F(0). This Huperzia lucidula (Shining clubmoss) protein is ATP synthase subunit b, chloroplastic.